The following is a 137-amino-acid chain: Envelope glycoprotein L (137 aa).

The N-terminal stretch at 1 to 22 (MRAVGVFLAICLVTIFVLPTWG) is a signal peptide. Positions 23–128 (NWAYPCCHVT…SVEDLFGANL (106 aa)) are interaction with gH. 2 cysteine pairs are disulfide-bonded: Cys28–Cys56 and Cys29–Cys79.

Belongs to the herpesviridae glycoprotein L family. As to quaternary structure, interacts with glycoprotein H (gH); this interaction is necessary for the correct processing and cell surface expression of gH. The heterodimer gH/gL seems to interact with gB trimers during fusion. The heterodimer gH/gL interacts with host EPHA2 to facilitate virus internalization and fusion.

It localises to the virion membrane. It is found in the host cell membrane. Its subcellular location is the host Golgi apparatus. The protein localises to the host trans-Golgi network. Functionally, the heterodimer glycoprotein H-glycoprotein L is required for the fusion of viral and plasma membranes leading to virus entry into the host cell. Acts as a functional inhibitor of gH and maintains gH in an inhibited form. Upon binding to host integrins, gL dissociates from gH leading to activation of the viral fusion glycoproteins gB and gH. Fusion of EBV with B-lymphocytes requires the additional receptor-binding protein gp42, which forms a complex with gH/gL. The heterodimer gH/gL targets also host EPHA2 to promote viral entry. This chain is Envelope glycoprotein L, found in Homo sapiens (Human).